Consider the following 439-residue polypeptide: Casein kinase I homolog 3 (439 aa).

A Protein kinase domain is found at 15-286; that stretch reads YRVGKKIGEG…LRSLFDSLLL (272 aa). Residues 21 to 29 and Lys44 contribute to the ATP site; that span reads IGEGSFGML. Asp134 acts as the Proton acceptor in catalysis. Residues 366–426 are disordered; that stretch reads DGIPGKAASP…PSKEKSRKKF (61 aa). Residues 372–413 are compositionally biased toward low complexity; that stretch reads AASPQVQQQQQTSSAQQQQPQRVEQPAPQTTQPTQVDTQQAA.

Belongs to the protein kinase superfamily. CK1 Ser/Thr protein kinase family. Casein kinase I subfamily.

The protein resides in the cytoplasm. The enzyme catalyses L-seryl-[protein] + ATP = O-phospho-L-seryl-[protein] + ADP + H(+). It carries out the reaction L-threonyl-[protein] + ATP = O-phospho-L-threonyl-[protein] + ADP + H(+). Its function is as follows. Casein kinases are operationally defined by their preferential utilization of acidic proteins such as caseins as substrates. This chain is Casein kinase I homolog 3 (cki3), found in Schizosaccharomyces pombe (strain 972 / ATCC 24843) (Fission yeast).